We begin with the raw amino-acid sequence, 450 residues long: MSRKYFGTDGIRGRANGLITPELAMKVGQAAGLVFQRGEYRHRVVIGKDTRLSGYMIETALVAGFTSVGMDVLLLGPMPTPAVAMLTKSMRADLGVMISASHNLFEDNGIKLFGPLGFKLSDEVERQIEQLLDECLDKRLAASASLGRARRIDGVHDRYIEFAKRTLPRDLSLDGLRVVIDCANGAAYKVVPEALWELGADVISIGVEPDGFNINKECGSTAPEALSRKVREMRADIGIALDGDADRVILVDERGHVVDGDQLLAVIAQSWQEDGRLSKPGIVATVMSNLGLERFLEGHGIEMVRTPVGDRYVLEQMMTGGYNLGGEPSGHIILSDYATTGDGFVAALQVLAVVQKLGRPVSEVCHKFDPLPQILKNVRFRAGKPLDDADVKSAIRDGEQRLNGHGRLLIRPSGTEPVIRVMAEGDDRDVVEEVVDSICSALGEAAAAAA.

The active-site Phosphoserine intermediate is the serine 101. Positions 101, 242, 244, and 246 each coordinate Mg(2+). Serine 101 is subject to Phosphoserine.

The protein belongs to the phosphohexose mutase family. It depends on Mg(2+) as a cofactor. Post-translationally, activated by phosphorylation.

The enzyme catalyses alpha-D-glucosamine 1-phosphate = D-glucosamine 6-phosphate. Catalyzes the conversion of glucosamine-6-phosphate to glucosamine-1-phosphate. The sequence is that of Phosphoglucosamine mutase from Rhodopseudomonas palustris (strain BisA53).